The sequence spans 460 residues: ATP synthase subunit beta (460 aa).

Residue 150 to 157 (GGAGVGKT) participates in ATP binding.

It belongs to the ATPase alpha/beta chains family. In terms of assembly, F-type ATPases have 2 components, CF(1) - the catalytic core - and CF(0) - the membrane proton channel. CF(1) has five subunits: alpha(3), beta(3), gamma(1), delta(1), epsilon(1). CF(0) has three main subunits: a(1), b(2) and c(9-12). The alpha and beta chains form an alternating ring which encloses part of the gamma chain. CF(1) is attached to CF(0) by a central stalk formed by the gamma and epsilon chains, while a peripheral stalk is formed by the delta and b chains.

The protein resides in the cell inner membrane. The enzyme catalyses ATP + H2O + 4 H(+)(in) = ADP + phosphate + 5 H(+)(out). Produces ATP from ADP in the presence of a proton gradient across the membrane. The catalytic sites are hosted primarily by the beta subunits. This chain is ATP synthase subunit beta, found in Yersinia pestis bv. Antiqua (strain Angola).